The following is a 145-amino-acid chain: uncharacterized protein (145 aa).

The disordered stretch occupies residues L62–G145. Positions A84–P95 are enriched in pro residues.

This is an uncharacterized protein from Homo sapiens (Human).